Consider the following 279-residue polypeptide: Proteasome subunit beta (279 aa).

A propeptide spans Met1–Ala53 (removed in mature form; by autocatalysis). Residue Thr54 is the Nucleophile of the active site.

This sequence belongs to the peptidase T1B family. The 20S proteasome core is composed of 14 alpha and 14 beta subunits that assemble into four stacked heptameric rings, resulting in a barrel-shaped structure. The two inner rings, each composed of seven catalytic beta subunits, are sandwiched by two outer rings, each composed of seven alpha subunits. The catalytic chamber with the active sites is on the inside of the barrel. Has a gated structure, the ends of the cylinder being occluded by the N-termini of the alpha-subunits. Is capped by the proteasome-associated ATPase, ARC.

It localises to the cytoplasm. It catalyses the reaction Cleavage of peptide bonds with very broad specificity.. It functions in the pathway protein degradation; proteasomal Pup-dependent pathway. Its activity is regulated as follows. The formation of the proteasomal ATPase ARC-20S proteasome complex, likely via the docking of the C-termini of ARC into the intersubunit pockets in the alpha-rings, may trigger opening of the gate for substrate entry. Interconversion between the open-gate and close-gate conformations leads to a dynamic regulation of the 20S proteasome proteolysis activity. In terms of biological role, component of the proteasome core, a large protease complex with broad specificity involved in protein degradation. The protein is Proteasome subunit beta of Salinispora arenicola (strain CNS-205).